Here is a 715-residue protein sequence, read N- to C-terminus: Eukaryotic peptide chain release factor GTP-binding subunit (715 aa).

Residues 1–12 (MANASLNGDQSK) are compositionally biased toward polar residues. 2 disordered regions span residues 1 to 148 (MANA…SLNK) and 168 to 262 (ATKK…SNSA). A several sort of repeats region spans residues 5-128 (SLNGDQSKQQ…PQQQQQQQSQ (124 aa)). Residues 13–25 (QQQQQQQQQQQQQ) show a composition bias toward low complexity. Residues 26-37 (NYYNPNAAQSFV) are compositionally biased toward polar residues. 2 stretches are compositionally biased toward low complexity: residues 39–129 (QGGY…QSQG) and 176–198 (SKPQ…ASAP). The charged stretch occupies residues 129–285 (GMSLADFQKQ…DEIDEEVVKD (157 aa)). 2 stretches are compositionally biased toward basic and acidic residues: residues 199–208 (QEEKKEEKEA) and 218–233 (ETKK…KKEA). The region spanning 290–515 (KDHVSIIFMG…YLDNMDTMNR (226 aa)) is the tr-type G domain. The segment at 299 to 306 (GHVDAGKS) is G1. Position 299–306 (299–306 (GHVDAGKS)) interacts with GTP. The tract at residues 355 to 359 (GKTIE) is G2. Residue T373 is modified to Phosphothreonine. Residues 376-379 (DAPG) form a G3 region. GTP contacts are provided by residues 376–380 (DAPGH) and 438–441 (NKMD). A G4 region spans residues 438–441 (NKMD). The interval 479-481 (SGY) is G5.

The protein belongs to the TRAFAC class translation factor GTPase superfamily. Classic translation factor GTPase family. ERF3 subfamily.

The protein resides in the cytoplasm. Its function is as follows. Involved in translation termination. Stimulates the activity of ERF1. Binds guanine nucleotides. In Candida albicans (Yeast), this protein is Eukaryotic peptide chain release factor GTP-binding subunit (SUP35).